The chain runs to 365 residues: MKRPRPTSQPSISSTVKPPLSPPVTPILKQKLHRTGTPKWFPLKLTHTELTLPLTFPTGQTFRWKKTGAIQYSGTIGPHLVSLRQRPGDDAVSYCVHCSTSPKSAELALLDFLNAEISLAELWSDFSKKDPRFGELARHLRGARVLRQDPLECLIQFLCSSNNNIARITKMVDFVSSLGLHLGDIDGFEFHQFPSLDRLSRVSEEEFRKAGFGYRAKYITGTVNALQAKPGGGNEWLLSLRKVELQEAVAALCTLPGVGPKVAACIALFSLDQHSAIPVDTHVWQIATNYLLPDLAGAKLTPKLHGRVAEAFVSKYGEYAGWAQTLLFIAELPAQKTLLQSFSQPINKLDESAEVNETSCDTLKP.

The span at 1–16 (MKRPRPTSQPSISSTV) shows a compositional bias: polar residues. The interval 1–24 (MKRPRPTSQPSISSTVKPPLSPPV) is disordered. Residues N162, R167, and R215 each contribute to the DNA site. K261 acts as the Schiff-base intermediate with DNA in catalysis. Positions 278 and 280 each coordinate 8-oxoguanine. H282 is a binding site for DNA. Q324 and F328 together coordinate 8-oxoguanine.

This sequence belongs to the type-1 OGG1 family. Expressed in stems, roots, rosette and cauline leaves, flowers and seeds.

It localises to the nucleus. It catalyses the reaction 2'-deoxyribonucleotide-(2'-deoxyribose 5'-phosphate)-2'-deoxyribonucleotide-DNA = a 3'-end 2'-deoxyribonucleotide-(2,3-dehydro-2,3-deoxyribose 5'-phosphate)-DNA + a 5'-end 5'-phospho-2'-deoxyribonucleoside-DNA + H(+). Involved in repair of DNA damaged by oxidation by incising DNA at 8-oxoG residues. Excises 7,8-dihydro-8-oxoguanine and 2,6-diamino-4-hydroxy-5-N-methylformamidopyrimidine (Fapy) from damaged DNA. Has a beta-lyase activity that nicks DNA 3' to the lesion. This Arabidopsis thaliana (Mouse-ear cress) protein is N-glycosylase/DNA lyase OGG1 (OGG1).